Consider the following 130-residue polypeptide: Small ribosomal subunit protein uS9 (130 aa).

It belongs to the universal ribosomal protein uS9 family.

This is Small ribosomal subunit protein uS9 from Clostridium beijerinckii (strain ATCC 51743 / NCIMB 8052) (Clostridium acetobutylicum).